Here is a 203-residue protein sequence, read N- to C-terminus: Enterotoxin-like toxin X (203 aa).

The protein belongs to the staphylococcal/streptococcal toxin family.

It localises to the secreted. Functionally, plays a role in the inhibition of the host innate immune system. Inhibits phagocytosis and killing by human neutrophils by interacting with multiple neutrophil surface glycoproteins in a sialic acid-dependent manner. The sequence is that of Enterotoxin-like toxin X from Staphylococcus aureus (strain NCTC 8325 / PS 47).